A 172-amino-acid chain; its full sequence is Large ribosomal subunit protein uL10 (172 aa).

Belongs to the universal ribosomal protein uL10 family. Part of the ribosomal stalk of the 50S ribosomal subunit. The N-terminus interacts with L11 and the large rRNA to form the base of the stalk. The C-terminus forms an elongated spine to which L12 dimers bind in a sequential fashion forming a multimeric L10(L12)X complex.

Functionally, forms part of the ribosomal stalk, playing a central role in the interaction of the ribosome with GTP-bound translation factors. This Rhodospirillum centenum (strain ATCC 51521 / SW) protein is Large ribosomal subunit protein uL10.